Consider the following 63-residue polypeptide: ATP synthase subunit epsilon, mitochondrial (63 aa).

In terms of assembly, F-type ATP synthases have 2 components, the catalytic core F(1) and the membrane-embedded component F(0), linked together by a central stalk and a peripheral stalk. The central stalk, also called rotor shaft, is often seen as part of F(1). The peripheral stalk is seen as part of F(0). F(0) contains the membrane channel next to the rotor. F-type ATP synthases form dimers but each monomer functions independently in ATP generation. The dimer consists of 18 different polypeptides: ATP1 (subunit alpha, part of F(1), 3 molecules per monomer), ATP2 (subunit beta, part of F(1), 3 molecules per monomer), ATP3 (subunit gamma, part of the central stalk), ATP4 (subunit b, part of the peripheral stalk), ATP5/OSCP (subunit 5/OSCP, part of the peripheral stalk), ATP6 (subunit a, part of the peripheral stalk), ATP7 (subunit d, part of the peripheral stalk), ATP8 (subunit 8, part of the peripheral stalk), OLI1 (subunit c, part of the rotor, 10 molecules per monomer), ATP14 (subunit h, part of the peripheral stalk), ATP15 (subunit epsilon, part of the central stalk), ATP16 (subunit delta, part of the central stalk), ATP17 (subunit f, part of the peripheral stalk), ATP18 (subunit i/j, part of the peripheral stalk). Dimer-specific subunits are ATP19 (subunit k, at interface between monomers), ATP20 (subunit g, at interface between monomers), TIM11 (subunit e, at interface between monomers). Also contains subunit L.

It is found in the mitochondrion inner membrane. In terms of biological role, mitochondrial membrane ATP synthase (F(1)F(0) ATP synthase or Complex V) produces ATP from ADP in the presence of a proton gradient across the membrane which is generated by electron transport complexes of the respiratory chain. F-type ATP synthases consist of two structural domains, F(1) - containing the extramembraneous catalytic core, and F(0) - containing the membrane proton channel, linked together by a central stalk and a peripheral stalk. During catalysis, ATP synthesis in the catalytic domain of F(1) is coupled via a rotary mechanism of the central stalk subunits to proton translocation. Part of the complex F(1) domain and the central stalk which is part of the complex rotary element. Rotation of the central stalk against the surrounding alpha/ATP1(3)beta/ATP2(3) subunits leads to hydrolysis of ATP in three separate catalytic sites on the beta/ATP2 subunits. The chain is ATP synthase subunit epsilon, mitochondrial from Pichia angusta (Yeast).